A 120-amino-acid chain; its full sequence is NAD(P)H-quinone oxidoreductase subunit 3, chloroplastic (120 aa).

A run of 3 helical transmembrane segments spans residues 9-29 (IFWA…LISG), 64-84 (MFAL…PWAV), and 88-108 (ILGV…VVGS).

This sequence belongs to the complex I subunit 3 family. NDH is composed of at least 16 different subunits, 5 of which are encoded in the nucleus.

It is found in the plastid. Its subcellular location is the chloroplast thylakoid membrane. It carries out the reaction a plastoquinone + NADH + (n+1) H(+)(in) = a plastoquinol + NAD(+) + n H(+)(out). The catalysed reaction is a plastoquinone + NADPH + (n+1) H(+)(in) = a plastoquinol + NADP(+) + n H(+)(out). NDH shuttles electrons from NAD(P)H:plastoquinone, via FMN and iron-sulfur (Fe-S) centers, to quinones in the photosynthetic chain and possibly in a chloroplast respiratory chain. The immediate electron acceptor for the enzyme in this species is believed to be plastoquinone. Couples the redox reaction to proton translocation, and thus conserves the redox energy in a proton gradient. In Nymphaea alba (White water-lily), this protein is NAD(P)H-quinone oxidoreductase subunit 3, chloroplastic.